The sequence spans 149 residues: 3-hydroxyacyl-[acyl-carrier-protein] dehydratase FabZ (149 aa).

H53 is a catalytic residue.

It belongs to the thioester dehydratase family. FabZ subfamily.

Its subcellular location is the cytoplasm. The catalysed reaction is a (3R)-hydroxyacyl-[ACP] = a (2E)-enoyl-[ACP] + H2O. Involved in unsaturated fatty acids biosynthesis. Catalyzes the dehydration of short chain beta-hydroxyacyl-ACPs and long chain saturated and unsaturated beta-hydroxyacyl-ACPs. The protein is 3-hydroxyacyl-[acyl-carrier-protein] dehydratase FabZ of Neisseria meningitidis serogroup C / serotype 2a (strain ATCC 700532 / DSM 15464 / FAM18).